A 217-amino-acid polypeptide reads, in one-letter code: PMKEVSIRGQGSLAYPGLRTQGNLETLSGPNDATRGLTSLADTFEHVIEELLDEQQVIQPSKENKDADLYSSRVMLSSQVPLEPPLLFLLEEYKNYLDAANMSMRVRRHSDPARRGELSVCDSTSEWVTAAEKKTAVDMSGATVTVLEKVPVPKGQLKQYFYETKCSSKGYAKEGCRGIDKRYWNSQCRTTQSYVRALTMDNKKRVGWRFIRIDTSC.

A propeptide spanning residues 1-108 (PMKEVSIRGQ…AANMSMRVRR (108 aa)) is cleaved from the precursor. N-linked (GlcNAc...) asparagine glycosylation is present at Asn-101. Intrachain disulfides connect Cys-121-Cys-188 and Cys-166-Cys-217.

It belongs to the NGF-beta family.

It localises to the secreted. Functionally, promotes the survival of neuronal populations that are all located either in the central nervous system or directly connected to it. This chain is Neurotrophic factor BDNF precursor form (BDNF), found in Acrantophis dumerili (Dumeril's ground boa).